The chain runs to 444 residues: ATP-dependent protease ATPase subunit HslU (444 aa).

Residues Ile18, 60 to 65, Asp256, Glu322, and Arg394 contribute to the ATP site; that span reads GVGKTE.

This sequence belongs to the ClpX chaperone family. HslU subfamily. A double ring-shaped homohexamer of HslV is capped on each side by a ring-shaped HslU homohexamer. The assembly of the HslU/HslV complex is dependent on binding of ATP.

It localises to the cytoplasm. Functionally, ATPase subunit of a proteasome-like degradation complex; this subunit has chaperone activity. The binding of ATP and its subsequent hydrolysis by HslU are essential for unfolding of protein substrates subsequently hydrolyzed by HslV. HslU recognizes the N-terminal part of its protein substrates and unfolds these before they are guided to HslV for hydrolysis. This chain is ATP-dependent protease ATPase subunit HslU, found in Buchnera aphidicola subsp. Cinara cedri (strain Cc).